Consider the following 363-residue polypeptide: Apelin receptor B (363 aa).

Residues 1-38 (MESEGFSATTEQYEYYDYANETGLQPCDETDWDFSYSL) are Extracellular-facing. N-linked (GlcNAc...) asparagine glycosylation occurs at asparagine 20. Disulfide bonds link cysteine 27–cysteine 287 and cysteine 109–cysteine 186. Residues 39-59 (LPVFYMIVFVLGLSGNGVVIF) form a helical membrane-spanning segment. The Cytoplasmic segment spans residues 60–77 (TVWKAKPKRRSADTYIGN). A helical transmembrane segment spans residues 78 to 98 (LALADLAFVVTLPLWATYTAL). Over 99-111 (GFHWPFGSALCKL) the chain is Extracellular. A helical transmembrane segment spans residues 112–132 (SSYLVLLNMFASVFCLTCLSF). Over 133–152 (DRYLAIVHSLSSAKLRSRSS) the chain is Cytoplasmic. The chain crosses the membrane as a helical span at residues 153 to 173 (ILVSLAVIWLFSGLLALPSLI). At 174–200 (LRDTRVEGNNTICDLDFSGVSSKENEN) the chain is on the extracellular side. N-linked (GlcNAc...) asparagine glycosylation occurs at asparagine 182. A helical transmembrane segment spans residues 201 to 221 (FWIGGLSILTTVPGFLLPLLL). At 222 to 249 (MTIFYCFIGGKVTMHFQNLKKEEQKKKR) the chain is on the cytoplasmic side. The helical transmembrane segment at 250–270 (LLKIIITLVVVFAICWLPFHI) threads the bilayer. Residues 271-297 (LKTIHFLDLMGFLELSCSAQNIIVSLH) are Extracellular-facing. Residues 298-318 (PYATCLAYVNSCLNPFLYAFF) traverse the membrane as a helical segment. Residues 319-363 (DLRFRSQCFFFFGFKKVLQGHLSNTSSSLSAQTQKSEIHSLATKV) lie on the Cytoplasmic side of the membrane.

The protein belongs to the G-protein coupled receptor 1 family. In terms of tissue distribution, expressed in all blood vessels including the posterior cardinal vein, intersomitic veins and the vitelline vein network.

Its subcellular location is the cell membrane. Its function is as follows. G protein-coupled receptor for peptide hormones apelin (apln) and apelin receptor early endogenous ligand (apela), that plays a role in the regulation of normal cardiovascular function and fluid homeostasis. When acting as apelin receptor, activates both G(i) protein pathway that inhibits adenylate cyclase activity, and the beta-arrestin pathway that promotes internalization of the receptor. Also functions as mechanoreceptor that is activated by pathological stimuli in a G-protein-independent fashion to induce beta-arrestin signaling, hence eliciting cardiac hypertrophy. However, the presence of apelin ligand blunts cardiac hypertrophic induction from APLNR/APJ on response to pathological stimuli. Plays a key role in early development such as gastrulation, blood vessels formation and heart morphogenesis by acting as a receptor for apela hormone, promoting endoderm and mesendoderm cell migration and regulating the migration of cells fated to become myocardial progenitors, respectively. Promotes angioblast migration toward the embryonic midline, i.e. the position of the future vessel formation, during vasculogenesis. May promote sinus venosus (SV)-derived endothelial cells migration into the developing heart to promote coronary blood vessel development. Required for cardiovascular development, particularly for intersomitic vein angiogenesis by acting as a receptor for apln hormone. Also plays a role in various processes in adults such as regulation of blood vessel formation, blood pressure, heart contractility, and heart failure. Acts upstream of the i/o type of G-alpha proteins in the differentiation of endothelium, erythroid cells, myeloid cells and cardiomyocytes. The protein is Apelin receptor B (aplnr-b) of Xenopus laevis (African clawed frog).